Consider the following 393-residue polypeptide: Nuclear speckle splicing regulatory protein 1 homolog (393 aa).

A disordered region spans residues 1–49 (MSAPPKRFGLIVKQKEEPKRAPVRVSSVFGDDDDDEAPATATNTSSASV). Residues 39–48 (ATATNTSSAS) show a composition bias toward low complexity. Residues 76 to 166 (NYDEIQAIKN…YREQEAEEAA (91 aa)) are a coiled coil. Residues 187–350 (LLNDLARDPT…SLKDKLKPKR (164 aa)) form a disordered region. Residues 199–209 (KQRKMEKKNVR) are compositionally biased toward basic residues. 4 stretches are compositionally biased toward basic and acidic residues: residues 222–236 (EDVK…KSIY), 243–261 (DEKK…EGEL), 317–333 (DHAQ…KSPE), and 341–350 (SLKDKLKPKR).

This sequence belongs to the NSRP1 family.

This Caenorhabditis briggsae protein is Nuclear speckle splicing regulatory protein 1 homolog.